Here is a 73-residue protein sequence, read N- to C-terminus: Beta-defensin 39 (73 aa).

Positions 1 to 23 are cleaved as a signal peptide; it reads MKISCFLLLVLSLSCFQINSVSG. 3 disulfide bridges follow: C29/C58, C36/C51, and C41/C59.

Belongs to the beta-defensin family.

The protein localises to the secreted. Its function is as follows. Has antibacterial activity. In Rattus norvegicus (Rat), this protein is Beta-defensin 39 (Defb39).